Reading from the N-terminus, the 348-residue chain is MTTTTSTLPLPTPWRDKLNGILFVALMAAAVVQLADLPFIRQFGFSPLVVGIVCGMLYGNFLRGTMPADWGAGVHFTARRLLRIAVAFYGLNISIQQIAAVGLPGLAVSVGVVASTLLIGTVAGQRLLGLDRDTAMLTAAGSAICGAAAVLAFEPTLRAAPHKSAVAVATVVLFGTLSMFLYPVIYHAGWLPFDTQALGIYIGGTVHEVAQVVGAASNIDPATTEVATIVKMTRVALLVPVLLVLGFWLRASAAAGADGKSHAKLPVPWFAIGFLVLAIVNSLDILPSDLVTAIRKLDVFVLTMAMTALGIETRFAQIRKAGPRVMALGLVLYAWLVFGGYGIVKLAT.

A run of 10 helical transmembrane segments spans residues 20-39, 43-62, 98-120, 135-157, 164-186, 196-215, 235-257, 267-286, 299-318, and 322-344; these read GILF…DLPF, FGFS…GNFL, IAAV…LLIG, AMLT…EPTL, SAVA…PVIY, QALG…VVGA, VALL…AAGA, VPWF…LDIL, VFVL…FAQI, and GPRV…YGIV.

This sequence belongs to the UPF0324 family.

It localises to the cell membrane. The chain is UPF0324 membrane protein BPP3732 from Bordetella parapertussis (strain 12822 / ATCC BAA-587 / NCTC 13253).